Here is a 408-residue protein sequence, read N- to C-terminus: Bone morphogenetic protein 4 (408 aa).

Residues 1–19 form the signal peptide; that stretch reads MIPGNRMLMVVLLCQVLLG. Residues 20 to 292 constitute a propeptide that is removed on maturation; sequence GASHASLIPE…HTLTRRRAKR (273 aa). Ser-91 carries the post-translational modification Phosphoserine. Residues 91–111 form a disordered region; the sequence is SGEEEEEEQSQGTGLEYPERP. Residues Asn-144 and Asn-209 are each glycosylated (N-linked (GlcNAc...) asparagine). The segment at 281–307 is disordered; sequence RGHTLTRRRAKRSPKHHPQRSRKKNKN. Positions 284–307 are enriched in basic residues; that stretch reads TLTRRRAKRSPKHHPQRSRKKNKN. Disulfide bonds link Cys-308–Cys-373, Cys-337–Cys-405, and Cys-341–Cys-407. N-linked (GlcNAc...) asparagine glycosylation is found at Asn-350 and Asn-365.

This sequence belongs to the TGF-beta family. In terms of assembly, homodimer; disulfide-linked. Interacts with SOSTDC1, GREM2, RGMA, RGMB and RGMC. Part of a complex consisting of TWSG1 and CHRD. Interacts with the serine proteases, HTRA1 and HTRA3; the interaction with either inhibits BMP4-mediated signaling. The HTRA protease activity is required for this inhibition. Interacts with FBN1 (via N-terminal domain) and FBN2. Interacts with type I receptor BMPR1A. Interacts with type II receptor BMPR2. Interacts with FSTL1; this interaction inhibits the activation of the BMP4/Smad1/5/8 signaling pathway. Interacts with SCUBE3. Interacts with TGFBR3. In the cochlea, detected in nonprosensory regions and outer sulcus (at protein level). Prior to gastrulation, expressed in the extraembryonic ectoderm. Later, expressed in the extraembryonic mesoderm.

The protein resides in the secreted. The protein localises to the extracellular space. It localises to the extracellular matrix. Functionally, growth factor of the TGF-beta superfamily that plays essential roles in many developmental processes, including neurogenesis, vascular development, angiogenesis and osteogenesis. Acts in concert with PTHLH/PTHRP to stimulate ductal outgrowth during embryonic mammary development and to inhibit hair follicle induction. Initiates the canonical BMP signaling cascade by associating with type I receptor BMPR1A and type II receptor BMPR2. Once all three components are bound together in a complex at the cell surface, BMPR2 phosphorylates and activates BMPR1A. In turn, BMPR1A propagates signal by phosphorylating SMAD1/5/8 that travel to the nucleus and act as activators and repressors of transcription of target genes. Positively regulates the expression of odontogenic development regulator MSX1 via inducing the IPO7-mediated import of SMAD1 to the nucleus. Required for MSX1-mediated mesenchymal molar tooth bud development beyond the bud stage, via promoting Wnt signaling. Acts as a positive regulator of odontoblast differentiation during mesenchymal tooth germ formation, expression is repressed during the bell stage by MSX1-mediated inhibition of CTNNB1 signaling. Able to induce its own expression in dental mesenchymal cells and also in the neighboring dental epithelial cells via an MSX1-mediated pathway. Can also signal through non-canonical BMP pathways such as ERK/MAP kinase, PI3K/Akt or SRC cascades. For example, induces SRC phosphorylation which, in turn, activates VEGFR2, leading to an angiogenic response. This chain is Bone morphogenetic protein 4, found in Mus musculus (Mouse).